Consider the following 372-residue polypeptide: Carbamoyl phosphate synthase small chain (372 aa).

Residues 1 to 179 are CPSase; sequence MRAILALEDG…ALVTGKTLPP (179 aa). L-glutamine contacts are provided by Ser45, Gly231, and Gly233. Residues 183 to 369 form the Glutamine amidotransferase type-1 domain; the sequence is DIVAFDFGIK…RKMIAASKRQ (187 aa). Cys258 acts as the Nucleophile in catalysis. Leu259, Gln262, Asn300, Gly302, and Phe303 together coordinate L-glutamine. Active-site residues include His342 and Glu344.

It belongs to the CarA family. In terms of assembly, composed of two chains; the small (or glutamine) chain promotes the hydrolysis of glutamine to ammonia, which is used by the large (or ammonia) chain to synthesize carbamoyl phosphate. Tetramer of heterodimers (alpha,beta)4.

The enzyme catalyses hydrogencarbonate + L-glutamine + 2 ATP + H2O = carbamoyl phosphate + L-glutamate + 2 ADP + phosphate + 2 H(+). The catalysed reaction is L-glutamine + H2O = L-glutamate + NH4(+). Its pathway is amino-acid biosynthesis; L-arginine biosynthesis; carbamoyl phosphate from bicarbonate: step 1/1. The protein operates within pyrimidine metabolism; UMP biosynthesis via de novo pathway; (S)-dihydroorotate from bicarbonate: step 1/3. Functionally, small subunit of the glutamine-dependent carbamoyl phosphate synthetase (CPSase). CPSase catalyzes the formation of carbamoyl phosphate from the ammonia moiety of glutamine, carbonate, and phosphate donated by ATP, constituting the first step of 2 biosynthetic pathways, one leading to arginine and/or urea and the other to pyrimidine nucleotides. The small subunit (glutamine amidotransferase) binds and cleaves glutamine to supply the large subunit with the substrate ammonia. The chain is Carbamoyl phosphate synthase small chain from Akkermansia muciniphila (strain ATCC BAA-835 / DSM 22959 / JCM 33894 / BCRC 81048 / CCUG 64013 / CIP 107961 / Muc).